A 238-amino-acid polypeptide reads, in one-letter code: MRHLHHQTSQIKLWAVIPAAGSGSRFSKTELKQYQYIQDATVIEHTVKRLSQLPLTGYVLAIGKQDTFASTLSFQDKHKAHFCNGGVERVHSVLNALNYLSQIAEEDDWVLVHDAARPCVTFECLNTLVKNAIETNQSAILAIPVRDTLKQVNQEQQIDKTVSRELLWQAQTPQIAKIGILKKAIETALKNNLTITDEASALESIGESVQVVMGRSDNIKITYPDDLELARLILQSQN.

This sequence belongs to the IspD/TarI cytidylyltransferase family. IspD subfamily.

It carries out the reaction 2-C-methyl-D-erythritol 4-phosphate + CTP + H(+) = 4-CDP-2-C-methyl-D-erythritol + diphosphate. It participates in isoprenoid biosynthesis; isopentenyl diphosphate biosynthesis via DXP pathway; isopentenyl diphosphate from 1-deoxy-D-xylulose 5-phosphate: step 2/6. Its function is as follows. Catalyzes the formation of 4-diphosphocytidyl-2-C-methyl-D-erythritol from CTP and 2-C-methyl-D-erythritol 4-phosphate (MEP). This is 2-C-methyl-D-erythritol 4-phosphate cytidylyltransferase from Acinetobacter baumannii (strain ATCC 17978 / DSM 105126 / CIP 53.77 / LMG 1025 / NCDC KC755 / 5377).